The chain runs to 320 residues: Pyrroline-5-carboxylate reductase 2 (320 aa).

Serine 2 carries the post-translational modification N-acetylserine. NADP(+) contacts are provided by residues 6–11 (IGAGQL) and serine 34. Alanine 8, glutamine 10, leucine 11, serine 34, glutamate 36, asparagine 56, valine 70, lysine 71, and alanine 97 together coordinate NADPH. Residues asparagine 56, 69–72 (AVKP), and 95–97 (CAA) each bind NADP(+). Glutamate 164 contributes to the L-proline binding site. NADPH is bound at residue asparagine 230. Positions 237 and 238 each coordinate L-proline. The tract at residues 298-320 (TTLTPTSSGKLLTRSPVPGGKKD) is disordered. The residue at position 304 (serine 304) is a Phosphoserine.

This sequence belongs to the pyrroline-5-carboxylate reductase family. Homodecamer; composed of 5 homodimers. Interacts with LTO1.

The protein localises to the cytoplasm. Its subcellular location is the mitochondrion. It carries out the reaction L-proline + NADP(+) = (S)-1-pyrroline-5-carboxylate + NADPH + 2 H(+). The catalysed reaction is L-proline + NAD(+) = (S)-1-pyrroline-5-carboxylate + NADH + 2 H(+). It participates in amino-acid biosynthesis; L-proline biosynthesis; L-proline from L-glutamate 5-semialdehyde: step 1/1. Functionally, oxidoreductase that catalyzes the last step in proline biosynthesis, which corresponds to the reduction of pyrroline-5-carboxylate to L-proline using NAD(P)H. At physiologic concentrations, has higher specific activity in the presence of NADH. Involved in cellular response to oxidative stress. In some cell types, such as erythrocytes, its primary function may be the generation of NADP(+). The sequence is that of Pyrroline-5-carboxylate reductase 2 (PYCR2) from Bos taurus (Bovine).